Here is a 289-residue protein sequence, read N- to C-terminus: Acetyl-coenzyme A carboxylase carboxyl transferase subunit beta (289 aa).

The 267-residue stretch at 23-289 folds into the CoA carboxyltransferase N-terminal domain; it reads HWIKCPSCSA…YDENPCLLHL (267 aa). Residues Cys-27, Cys-30, Cys-46, and Cys-49 each coordinate Zn(2+). Residues 27-49 form a C4-type zinc finger; that stretch reads CPSCSALMYYKEVIAQHHVCPKC.

It belongs to the AccD/PCCB family. In terms of assembly, acetyl-CoA carboxylase is a heterohexamer composed of biotin carboxyl carrier protein (AccB), biotin carboxylase (AccC) and two subunits each of ACCase subunit alpha (AccA) and ACCase subunit beta (AccD). Zn(2+) is required as a cofactor.

The protein resides in the cytoplasm. The enzyme catalyses N(6)-carboxybiotinyl-L-lysyl-[protein] + acetyl-CoA = N(6)-biotinyl-L-lysyl-[protein] + malonyl-CoA. It functions in the pathway lipid metabolism; malonyl-CoA biosynthesis; malonyl-CoA from acetyl-CoA: step 1/1. Functionally, component of the acetyl coenzyme A carboxylase (ACC) complex. Biotin carboxylase (BC) catalyzes the carboxylation of biotin on its carrier protein (BCCP) and then the CO(2) group is transferred by the transcarboxylase to acetyl-CoA to form malonyl-CoA. The protein is Acetyl-coenzyme A carboxylase carboxyl transferase subunit beta of Wolinella succinogenes (strain ATCC 29543 / DSM 1740 / CCUG 13145 / JCM 31913 / LMG 7466 / NCTC 11488 / FDC 602W) (Vibrio succinogenes).